A 315-amino-acid chain; its full sequence is Heterodimeric geranylgeranyl pyrophosphate synthase small subunit 1, chloroplastic (315 aa).

2 residues coordinate Mg(2+): Asp-124 and Gly-130. Positions 228, 265, and 280 each coordinate dimethylallyl diphosphate.

The protein belongs to the FPP/GGPP synthase family. Part of a heterodimeric geranyl(geranyl)diphosphate synthase. The cofactor is Mg(2+). Mainly expressed in trichomes, and, to a lower extent, in roots, leaves, flowers and stems.

Its subcellular location is the plastid. The protein resides in the chloroplast thylakoid membrane. The protein localises to the chloroplast. Its function is as follows. Heterodimeric geranyl(geranyl)-diphosphate (GPP) synthase small subunit. The small subunit alone is inactive in vitro while the large subunit GGPPS1 catalyzes mainly the production of geranygeranyl-diphosphate in vitro. Upon association of the two subunits, the product profile changes and the production of gerany-diphosphate is strongly increased. In Cannabis sativa (Hemp), this protein is Heterodimeric geranylgeranyl pyrophosphate synthase small subunit 1, chloroplastic.